A 56-amino-acid chain; its full sequence is Large ribosomal subunit protein bL32 (56 aa).

A compositionally biased stretch (basic residues) spans 1 to 16; that stretch reads MAVQKNRKTRSKRGMR. Residues 1-37 form a disordered region; sequence MAVQKNRKTRSKRGMRRSHDALGTATMSVDSTSGETH. The span at 25–35 shows a compositional bias: polar residues; the sequence is ATMSVDSTSGE.

Belongs to the bacterial ribosomal protein bL32 family.

The chain is Large ribosomal subunit protein bL32 from Pseudoalteromonas atlantica (strain T6c / ATCC BAA-1087).